We begin with the raw amino-acid sequence, 116 residues long: Dynein light chain Tctex-type 3 (116 aa).

Tyrosine 4 is modified (3'-nitrotyrosine).

Belongs to the dynein light chain Tctex-type family. Homodimer. The cytoplasmic dynein 1 complex consists of two catalytic heavy chains (HCs) and a number of non-catalytic subunits presented by intermediate chains (ICs), light intermediate chains (LICs) and light chains (LCs); the composition seems to vary in respect to the IC, LIC and LC composition. The heavy chain homodimer serves as a scaffold for the probable homodimeric assembly of the respective non-catalytic subunits. The ICs and LICs bind directly to the HC dimer and the LCs assemble on the IC dimer. DYNLT1 and DYNLT3 compete for association with dynein IC (DYNC1I1 or DYNC1I2). Self-associates. Interacts with DYNC1I1 and DYNC1I2. Interacts with BUB3. Interacts with SATB1 in nucleus to form complex with matrix attachment regions (MARs) of DNA.

It is found in the nucleus. The protein resides in the cytoplasm. The protein localises to the cytoskeleton. It localises to the chromosome. Its subcellular location is the centromere. It is found in the kinetochore. Its function is as follows. Acts as one of several non-catalytic accessory components of the cytoplasmic dynein 1 complex that are thought to be involved in linking dynein to cargos and to adapter proteins that regulate dynein function. Cytoplasmic dynein 1 acts as a motor for the intracellular retrograde motility of vesicles and organelles along microtubules. Probably binds BUB3 as part of transport cargo. Required for the efficient progression through mitosis. The protein is Dynein light chain Tctex-type 3 (DYNLT3) of Canis lupus familiaris (Dog).